The primary structure comprises 414 residues: Serine hydroxymethyltransferase (414 aa).

(6S)-5,6,7,8-tetrahydrofolate-binding positions include L121 and 125–127 (GHL). At K229 the chain carries N6-(pyridoxal phosphate)lysine.

It belongs to the SHMT family. In terms of assembly, homodimer. The cofactor is pyridoxal 5'-phosphate.

The protein resides in the cytoplasm. The catalysed reaction is (6R)-5,10-methylene-5,6,7,8-tetrahydrofolate + glycine + H2O = (6S)-5,6,7,8-tetrahydrofolate + L-serine. Its pathway is one-carbon metabolism; tetrahydrofolate interconversion. It participates in amino-acid biosynthesis; glycine biosynthesis; glycine from L-serine: step 1/1. Functionally, catalyzes the reversible interconversion of serine and glycine with tetrahydrofolate (THF) serving as the one-carbon carrier. This reaction serves as the major source of one-carbon groups required for the biosynthesis of purines, thymidylate, methionine, and other important biomolecules. Also exhibits THF-independent aldolase activity toward beta-hydroxyamino acids, producing glycine and aldehydes, via a retro-aldol mechanism. This is Serine hydroxymethyltransferase from Thiobacillus denitrificans (strain ATCC 25259 / T1).